Here is a 250-residue protein sequence, read N- to C-terminus: 4-hydroxy-tetrahydrodipicolinate reductase (250 aa).

NAD(+) contacts are provided by residues 10–15 (GARGRI), 78–80 (GTT), and 105–108 (APNF). H135 serves as the catalytic Proton donor/acceptor. H136 lines the (S)-2,3,4,5-tetrahydrodipicolinate pocket. K139 serves as the catalytic Proton donor. 145–146 (GT) lines the (S)-2,3,4,5-tetrahydrodipicolinate pocket. The disordered stretch occupies residues 158–177 (RAEAGSAPQPDATTTALDGA).

This sequence belongs to the DapB family.

It is found in the cytoplasm. The enzyme catalyses (S)-2,3,4,5-tetrahydrodipicolinate + NAD(+) + H2O = (2S,4S)-4-hydroxy-2,3,4,5-tetrahydrodipicolinate + NADH + H(+). It carries out the reaction (S)-2,3,4,5-tetrahydrodipicolinate + NADP(+) + H2O = (2S,4S)-4-hydroxy-2,3,4,5-tetrahydrodipicolinate + NADPH + H(+). The protein operates within amino-acid biosynthesis; L-lysine biosynthesis via DAP pathway; (S)-tetrahydrodipicolinate from L-aspartate: step 4/4. Its function is as follows. Catalyzes the conversion of 4-hydroxy-tetrahydrodipicolinate (HTPA) to tetrahydrodipicolinate. In Streptomyces griseus subsp. griseus (strain JCM 4626 / CBS 651.72 / NBRC 13350 / KCC S-0626 / ISP 5235), this protein is 4-hydroxy-tetrahydrodipicolinate reductase.